The following is a 110-amino-acid chain: Phosphoribosyl-AMP cyclohydrolase (110 aa).

A Mg(2+)-binding site is contributed by D74. C75 provides a ligand contact to Zn(2+). The Mg(2+) site is built by D76 and D78. The Zn(2+) site is built by C91 and C98.

The protein belongs to the PRA-CH family. Homodimer. It depends on Mg(2+) as a cofactor. Zn(2+) serves as cofactor.

Its subcellular location is the cytoplasm. It carries out the reaction 1-(5-phospho-beta-D-ribosyl)-5'-AMP + H2O = 1-(5-phospho-beta-D-ribosyl)-5-[(5-phospho-beta-D-ribosylamino)methylideneamino]imidazole-4-carboxamide. It functions in the pathway amino-acid biosynthesis; L-histidine biosynthesis; L-histidine from 5-phospho-alpha-D-ribose 1-diphosphate: step 3/9. Functionally, catalyzes the hydrolysis of the adenine ring of phosphoribosyl-AMP. The polypeptide is Phosphoribosyl-AMP cyclohydrolase (Lacticaseibacillus casei (strain BL23) (Lactobacillus casei)).